The sequence spans 1064 residues: Valine--tRNA ligase, mitochondrial (1064 aa).

Residues methionine 1–histidine 26 constitute a mitochondrion transit peptide. The disordered stretch occupies residues phenylalanine 25 to glutamate 65. A compositionally biased stretch (basic and acidic residues) spans arginine 42–alanine 56. Residues proline 146–histidine 156 carry the 'HIGH' region motif. The 'KMSKS' region signature appears at lysine 659–serine 663. Lysine 662 is an ATP binding site.

This sequence belongs to the class-I aminoacyl-tRNA synthetase family.

Its subcellular location is the mitochondrion. It catalyses the reaction tRNA(Val) + L-valine + ATP = L-valyl-tRNA(Val) + AMP + diphosphate. Catalyzes the attachment of valine to tRNA(Val) in a two-step reaction: valine is first activated by ATP to form Val-AMP and then transferred to the acceptor end of tRNA(Val). The protein is Valine--tRNA ligase, mitochondrial (VARS2) of Macaca mulatta (Rhesus macaque).